Consider the following 340-residue polypeptide: Methionine import ATP-binding protein MetN 2 (340 aa).

Residues 2 to 241 (ITLQNVVKEY…PQEKVTQRFV (240 aa)) enclose the ABC transporter domain. 38 to 45 (GYSGAGKS) provides a ligand contact to ATP.

This sequence belongs to the ABC transporter superfamily. Methionine importer (TC 3.A.1.24) family. As to quaternary structure, the complex is composed of two ATP-binding proteins (MetN), two transmembrane proteins (MetI) and a solute-binding protein (MetQ).

It is found in the cell membrane. It catalyses the reaction L-methionine(out) + ATP + H2O = L-methionine(in) + ADP + phosphate + H(+). It carries out the reaction D-methionine(out) + ATP + H2O = D-methionine(in) + ADP + phosphate + H(+). Part of the ABC transporter complex MetNIQ involved in methionine import. Responsible for energy coupling to the transport system. The chain is Methionine import ATP-binding protein MetN 2 from Listeria monocytogenes serovar 1/2a (strain ATCC BAA-679 / EGD-e).